A 2476-amino-acid chain; its full sequence is Zonadhesin (2476 aa).

Residues 1 to 29 (MLGLPALAGPMAMPHPPLIPSTPTLLAFS) form the signal peptide. Topologically, residues 30 to 2418 (FPGGFYMLLD…SPKKPEASNR (2389 aa)) are extracellular. MAM domains follow at residues 31 to 144 (PGGF…PCEE) and 147 to 312 (PQCD…TCRG). 2 N-linked (GlcNAc...) asparagine glycosylation sites follow: Asn109 and Asn269. Disordered regions lie at residues 313–332 (PSETSVSTEKPVAPTEKPTV), 358–462 (PTVP…TERT), and 537–632 (ERTT…RTTI). The segment at 319 to 687 (STEKPVAPTE…ATTVTPRTTI (369 aa)) is 53 X approximate heptapeptide repeats (mucin-like domain). A compositionally biased stretch (low complexity) spans 358–373 (PTVPTEKPTIPTEKST). A compositionally biased stretch (pro residues) spans 400–412 (TTPPEGPAVPPKG). The segment covering 423-433 (HTEKSTVHTEK) has biased composition (basic and acidic residues). The span at 451-462 (PTKRTTTPTERT) shows a compositional bias: low complexity. The TIL 1 domain maps to 690 to 739 (CPPNAHFERCACPVSCQSPTPNCELFCKPGCVCDPGFLFSGSHCVNASSC). Asn735, Asn758, and Asn833 each carry an N-linked (GlcNAc...) asparagine glycan. The 55-residue stretch at 740 to 794 (DCFYNDNYYKLGTDWFSPNCTEHCHCRPSSRMECQTFKCGTHTVCQLKNGQYGCH) folds into the VWFC 1 domain. The VWFD 1 domain occupies 799-976 (ATCSVYGDPH…TSEDADQQCE (178 aa)). Intrachain disulfides connect Cys801-Cys936 and Cys823-Cys975. The segment at 943–983 (SSNDNQKPDGSPAKDEKELGSSWQTSEDADQQCEENQVSPP) is disordered. Residues 1070–1123 (CPRNSRYTLCARLCPDTCHSEFSGRACKDRCVEGCECDPGFVLSGLQCVSRSEC) form the TIL 2 domain. In terms of domain architecture, VWFC 2 spans 1124–1180 (GCLDSTAGYVKVGERWFKPGCRQLCICEGNNRTRCVLWRCQAQEFCGQQDGIYGCHA). N-linked (GlcNAc...) asparagine glycosylation occurs at Asn1154. Positions 1184–1364 (ATCTVSGDPH…INELSEPGCF (181 aa)) constitute a VWFD 2 domain. Intrachain disulfides connect Cys1186–Cys1324 and Cys1208–Cys1363. 2 N-linked (GlcNAc...) asparagine glycosylation sites follow: Asn1329 and Asn1448. The TIL 3 domain maps to 1456-1511 (CPSGSSYSTCANPCPATCLSLNNPSYCPSTLPCAEGCECQKGHILSGTSCVPLSQC). The 57-residue stretch at 1512–1568 (GCTTQRGSYHPVGESWYTDNSCSRLCTCSAHNNISCRQASCKPSQMCWPQDGLIRCR) folds into the VWFC 3 domain. Residues Asn1544, Asn1596, and Asn1654 are each glycosylated (N-linked (GlcNAc...) asparagine). Residues 1573 to 1751 (GVCRIPDTSH…RDKEIDPNCQ (179 aa)) enclose the VWFD 3 domain. Intrachain disulfides connect Cys1575/Cys1712 and Cys1597/Cys1750. Residues 1747-1759 (DPNCQEDDRKTEA) are compositionally biased toward basic and acidic residues. A disordered region spans residues 1747–1768 (DPNCQEDDRKTEAESQEQPSAN). N-linked (GlcNAc...) asparagine glycosylation is present at Asn1843. One can recognise a TIL 4 domain in the interval 1851–1907 (CSAHSVYTSCVPSCLPSCQDPEGQCTGAGAPSTCEEGCICEPGYVLSEQQCVARSQC). The 56-residue stretch at 1908 to 1963 (GCRDARGTFLPVGRFRLSSGCSQMCVCTAGAIECRPFTCPSGSQCEPNEDGKDFCQ) folds into the VWFC 4 domain. N-linked (GlcNAc...) asparagine glycosylation is present at Asn1965. Residues 1968 to 2145 (NLCSVFGDPH…WEVKAKEGHP (178 aa)) enclose the VWFD 4 domain. A disulfide bridge connects residues Cys1970 and Cys2107. N-linked (GlcNAc...) asparagine glycosylation is found at Asn2122, Asn2165, and Asn2178. Residues 2257-2310 (CPANTVYQSCMTPCPASCATLAVPRACDGPCVEGCASLPGYIYSGAQSLPMAHC) form the TIL 5 domain. Positions 2311-2365 (GCTNNGVYYQQGDSFVTENCSQRCTCASSGVLLCEPLSCRPGEICTLGNLTRGCF) constitute a VWFC 5 domain. 2 N-linked (GlcNAc...) asparagine glycosylation sites follow: Asn2329 and Asn2359. The EGF-like domain occupies 2366–2402 (RDSPCLQNPCQNDGRCREQGTHFTCECELGYGGDLCT). Disulfide bonds link Cys2370–Cys2381, Cys2375–Cys2390, and Cys2392–Cys2401. The chain crosses the membrane as a helical span at residues 2419–2439 (VAILLGMLMPTVLLVPAVTRV). Residues 2438–2476 (RVSRKRRRRRRPSRERTQSQNRGKRAGTDCAPEQAYKVA) form a disordered region. Basic residues predominate over residues 2439–2450 (VSRKRRRRRRPS). The Cytoplasmic portion of the chain corresponds to 2440–2476 (SRKRRRRRRPSRERTQSQNRGKRAGTDCAPEQAYKVA).

Probably forms covalent oligomers. In terms of processing, the MAM domains and the mucin-like domains are missing from the zonadhesin that binds to the egg extracellular matrix. Processing might occur during sperm maturation and/or capacitation. As to expression, in testis, primarily in haploid spermatids. Not in lung, liver, heart, spleen, brain, kidney, epididymis.

It localises to the cell membrane. Functionally, binds in a species-specific manner to the zona pellucida of the egg. May be involved in gamete recognition and/or signaling. The chain is Zonadhesin (ZAN) from Sus scrofa (Pig).